The chain runs to 396 residues: 1-deoxy-D-xylulose 5-phosphate reductoisomerase (396 aa).

Positions 15, 16, 17, 18, 41, and 129 each coordinate NADPH. A 1-deoxy-D-xylulose 5-phosphate-binding site is contributed by lysine 130. Glutamate 131 is an NADPH binding site. Residue aspartate 155 coordinates Mn(2+). Residues serine 156, glutamate 157, serine 182, and histidine 205 each coordinate 1-deoxy-D-xylulose 5-phosphate. Glutamate 157 contacts Mn(2+). Glycine 211 is an NADPH binding site. 1-deoxy-D-xylulose 5-phosphate-binding residues include serine 218, asparagine 223, lysine 224, and glutamate 227. Glutamate 227 provides a ligand contact to Mn(2+).

It belongs to the DXR family. It depends on Mg(2+) as a cofactor. Mn(2+) is required as a cofactor.

The enzyme catalyses 2-C-methyl-D-erythritol 4-phosphate + NADP(+) = 1-deoxy-D-xylulose 5-phosphate + NADPH + H(+). Its pathway is isoprenoid biosynthesis; isopentenyl diphosphate biosynthesis via DXP pathway; isopentenyl diphosphate from 1-deoxy-D-xylulose 5-phosphate: step 1/6. In terms of biological role, catalyzes the NADPH-dependent rearrangement and reduction of 1-deoxy-D-xylulose-5-phosphate (DXP) to 2-C-methyl-D-erythritol 4-phosphate (MEP). This is 1-deoxy-D-xylulose 5-phosphate reductoisomerase from Xanthomonas oryzae pv. oryzae (strain MAFF 311018).